The sequence spans 894 residues: MGACLTLSFSCDEVVNQISQGLCINVGYICELSKNVVAMKKDMEVLKKKRDDVKRRVDIEEFTRRRERLSQVQGWLTNVSTVENKFNELLTTNDAELQRLCLFGFCSKNVKMSYLYGKRVVLMLKEIESLSSQGDFDTVTLATPIARIEEMPIQPTIVGQETMLERVWTRLTEDGDEIVGLYGMGGVGKTTLLTRINNKFSEKCSGFGVVIWVVVSKSPDIHRIQGDIGKRLDLGGEEWDNVNENQRALDIYNVLGKQKFVLLLDDIWEKVNLEVLGVPYPSRQNGCKVVFTTRSRDVCGRMRVDDPMEVSCLEPNEAWELFQMKVGENTLKGHPDIPELARKVAGKCCGLPLALNVIGETMACKRMVQEWRNAIDVLSSYAAEFPGMEQILPILKYSYDNLNKEQVKPCFLYCSLFPEDYRMEKERLIDYWICEGFIDENESRERALSQGYEIIGILVRACLLLEEAINKEQVKMHDVVREMALWIASDLGEHKERCIVQVGVGLREVPKVKNWSSVRRMSLMENEIEILSGSPECLELTTLFLQKNDSLLHISDEFFRCIPMLVVLDLSGNSSLRKLPNQISKLVSLRYLDLSWTYIKRLPVGLQELKKLRYLRLDYMKRLKSISGISNISSLRKLQLLQSKMSLDMSLVEELQLLEHLEVLNISIKSSLVVEKLLNAPRLVKCLQILVLRGVQEESSGVLTLPDMDNLNKVIIRKCGMCEIKIERKTLSLSSNRSPKTQFLHNLSTVHISSCDGLKDLTWLLFAPNLTSLEVLDSELVEGIINQEKAMTMSGIIPFQKLESLRLHNLAMLRSIYWQPLSFPCLKTIHITKCPELRKLPLDSEIAIRDEELVIKYQEEEWLERVEWDNEATRLRFLPFFKFFGPEWQVSYVR.

Residues 31-71 (ELSKNVVAMKKDMEVLKKKRDDVKRRVDIEEFTRRRERLSQ) are a coiled coil. The region spanning 140-443 (TLATPIARIE…CEGFIDENES (304 aa)) is the NB-ARC domain. 183-190 (GMGGVGKT) provides a ligand contact to ATP. 7 LRR repeats span residues 517 to 538 (SVRR…PECL), 539 to 561 (ELTT…FFRC), 564 to 586 (MLVV…ISKL), 588 to 610 (SLRY…QELK), 611 to 633 (KLRY…SNIS), 634 to 656 (SLRK…EELQ), and 660 to 681 (HLEV…LNAP).

The protein belongs to the disease resistance NB-LRR family. In terms of assembly, interacts with PAT1.

With respect to regulation, negatively regulated by the MEKK1-MKK1-MKK2-MPK4 kinase cascade. Functionally, disease resistance protein that mediates defense responses against the bacterial pathogen Pseudomonas syringae pv tomato strain DC3000, and the virulent oomycete Hyaloperonospora arabidopsidis isolate Noco2. Becomes active when the MEKK1-MKK1-MKK2-MPK4 kinase cascade is disrupted by the microbial effector hopAI1. Does not seem to be required for the activation of MPK4 by flg22, or flg22-induced up-regulation of PAD3. Functions downstream of MEKK2/SUMM1 in immune responses, including cell death and defense responses. In Arabidopsis thaliana (Mouse-ear cress), this protein is Disease resistance protein SUMM2.